Here is a 1315-residue protein sequence, read N- to C-terminus: Serine-aspartate repeat-containing protein D (1315 aa).

Positions 1–35 are cleaved as a signal peptide; that stretch reads MLNRENKTAITRKGMVSNRLNKFSIRKYTVGTASI. Positions 23 to 34 match the YSIRK-G/S signaling motif motif; that stretch reads FSIRKYTVGTAS. Residues 36 to 568 form a ligand binding A region region; that stretch reads LVGTTLIFGL…NNQSGGAGQE (533 aa). Residues 54 to 185 form a disordered region; that stretch reads ESTNKELNEA…NKKVDAKTES (132 aa). Polar residues-rich tracts occupy residues 62–71 and 94–108; these read EATTSASDNQ and EMVS…SNGN. The span at 130–145 shows a compositional bias: basic and acidic residues; sequence KSDEQASPKSTNEDLN. Composition is skewed to polar residues over residues 146–155 and 163–173; these read TKQTISNQEA and NKSVVNVQPTN. Positions 174 to 183 are enriched in basic and acidic residues; the sequence is EENKKVDAKT. CNA-B domains follow at residues 569–680, 681–791, 792–901, 902–1012, and 1013–1123; these read VYKI…IYKP, KYNL…YKTP, KYNL…FYKP, TYNL…YKTP, and KYSL…EEET. Disordered regions lie at residues 857 to 883, 972 to 992, and 1078 to 1291; these read ETPS…TSTT, YTPT…GLTT, and EKPA…SNNA. Polar residues-rich tracts occupy residues 860 to 869 and 972 to 981; these read SGYTPTQVGS and YTPTSVTSGN. Acidic residues-rich tracts occupy residues 1091–1101, 1118–1134, 1142–1164, and 1172–1254; these read TEDDKDADGGE, YYEE…DSDS, and SDSD…DSDS. Positions 1278 to 1282 match the LPXTG sorting signal motif; that stretch reads LPETG. Thr-1281 bears the Pentaglycyl murein peptidoglycan amidated threonine mark. Residues 1282–1315 constitute a propeptide, removed by sortase; it reads GNENSGSNNATLFGGLFAALGSLLLFGRRKKQNK.

It belongs to the serine-aspartate repeat-containing protein (SDr) family. In terms of assembly, interacts with host DSG1; this interaction increases S.aureus adherence to keratinocytes. Anchored to the cell wall by sortase A.

The protein resides in the secreted. It localises to the cell wall. Functionally, cell surface-associated calcium-binding protein which plays an important role in adhesion and pathogenesis. Mediates interactions with components of the extracellular matrix such as host DSG1 to promote bacterial adhesion to host cells. Contributes to the resistance to killing by innate immune components such as neutrophils present in blood and thus attenuates bacterial clearance. The protein is Serine-aspartate repeat-containing protein D (sdrD) of Staphylococcus aureus (strain Newman).